The following is a 314-amino-acid chain: uncharacterized protein (314 aa).

A compositionally biased stretch (basic and acidic residues) spans 68–91 (EKKKKSSSFEKRDKRRVQLKEKSP). Disordered regions lie at residues 68 to 97 (EKKK…TPRN) and 141 to 164 (MDVQ…RPAS). A compositionally biased stretch (polar residues) spans 144-157 (QSPSTMSTSKNNVR).

The protein localises to the mitochondrion. This is an uncharacterized protein from Schizosaccharomyces pombe (strain 972 / ATCC 24843) (Fission yeast).